A 118-amino-acid chain; its full sequence is Small ribosomal subunit protein uS13 (118 aa).

Residues 94 to 118 (SLPLRGQRTKTNARTRKGPRKPIRK) form a disordered region.

This sequence belongs to the universal ribosomal protein uS13 family. As to quaternary structure, part of the 30S ribosomal subunit. Forms a loose heterodimer with protein S19. Forms two bridges to the 50S subunit in the 70S ribosome.

Its function is as follows. Located at the top of the head of the 30S subunit, it contacts several helices of the 16S rRNA. In the 70S ribosome it contacts the 23S rRNA (bridge B1a) and protein L5 of the 50S subunit (bridge B1b), connecting the 2 subunits; these bridges are implicated in subunit movement. Contacts the tRNAs in the A and P-sites. In Shewanella woodyi (strain ATCC 51908 / MS32), this protein is Small ribosomal subunit protein uS13.